Reading from the N-terminus, the 474-residue chain is UDP-N-acetylmuramate--L-alanine ligase (474 aa).

108 to 114 serves as a coordination point for ATP; that stretch reads GTHGKTT.

It belongs to the MurCDEF family.

The protein localises to the cytoplasm. The catalysed reaction is UDP-N-acetyl-alpha-D-muramate + L-alanine + ATP = UDP-N-acetyl-alpha-D-muramoyl-L-alanine + ADP + phosphate + H(+). It participates in cell wall biogenesis; peptidoglycan biosynthesis. Cell wall formation. The protein is UDP-N-acetylmuramate--L-alanine ligase of Chloroflexus aggregans (strain MD-66 / DSM 9485).